The primary structure comprises 468 residues: PE family protein PE3 (468 aa).

The PE domain maps to 1 to 92 (MSYVIAAPEM…AGAAYAQAEA (92 aa)). Residues 154–375 (PVAQYTPEQW…DLRVLVDLGY (222 aa)) enclose the PE-PPE domain.

This sequence belongs to the mycobacterial PE family.

Its subcellular location is the secreted. It is found in the cell wall. Its function is as follows. Plays significant roles in mycobacterial persistence during infection and modulates host immune response. The polypeptide is PE family protein PE3 (Mycobacterium tuberculosis (strain ATCC 25618 / H37Rv)).